We begin with the raw amino-acid sequence, 461 residues long: Trimethylamine monooxygenase (461 aa).

Residues Ser14, Glu39, Lys40, Gln41, Met47, Trp48, and His64 each contribute to the FAD site. Residues Trp72 and Asn74 each coordinate NADP(+). Residues Asn74 and Ala127 each coordinate FAD. 5 residues coordinate NADP(+): Ser206, Ser207, Ser209, Arg230, and Thr231. 2 residues coordinate FAD: Gln319 and Thr322. An NADP(+)-binding site is contributed by Arg413.

It belongs to the FMO family. FAD serves as cofactor.

It carries out the reaction trimethylamine + NADPH + O2 = trimethylamine N-oxide + NADP(+) + H2O. In terms of biological role, catalyzes the oxidation of trimethylamine (TMA) to produce trimethylamine N-oxide (TMAO). The produced TMAO is accumulated in the cell, functioning as a piezolyte, improving both growth and survival at high hydrostatic pressure (HHP). In Myroides profundi, this protein is Trimethylamine monooxygenase.